The chain runs to 207 residues: A-type ATP synthase subunit E (207 aa).

Belongs to the V-ATPase E subunit family. As to quaternary structure, has multiple subunits with at least A(3), B(3), C, D, E, F, H, I and proteolipid K(x).

The protein resides in the cell membrane. In terms of biological role, component of the A-type ATP synthase that produces ATP from ADP in the presence of a proton gradient across the membrane. In Methanosphaera stadtmanae (strain ATCC 43021 / DSM 3091 / JCM 11832 / MCB-3), this protein is A-type ATP synthase subunit E.